The chain runs to 544 residues: Probable protein kinase UbiB (544 aa).

The helical transmembrane segment at 1–21 threads the bilayer; it reads MIFGELRRLYLIIGVMLSYGL. The 378-residue stretch at 123-500 folds into the Protein kinase domain; that stretch reads DFQQEPLASA…HVRQSQSRFL (378 aa). ATP-binding positions include 129-137 and lysine 151; that span reads LASASIAQV. Catalysis depends on aspartate 286, which acts as the Proton acceptor. The next 2 membrane-spanning stretches (helical) occupy residues 499 to 519 and 520 to 540; these read FLFG…TQGA and DEGS…IIGW.

Belongs to the ABC1 family. UbiB subfamily.

It is found in the cell inner membrane. It participates in cofactor biosynthesis; ubiquinone biosynthesis [regulation]. Its function is as follows. Is probably a protein kinase regulator of UbiI activity which is involved in aerobic coenzyme Q (ubiquinone) biosynthesis. In Sodalis glossinidius (strain morsitans), this protein is Probable protein kinase UbiB.